Reading from the N-terminus, the 531-residue chain is T-complex protein 1 subunit zeta-2 (531 aa).

Belongs to the TCP-1 chaperonin family. Component of the chaperonin-containing T-complex (TRiC), a heterooligomeric complex of about 850 to 900 kDa that forms two stacked rings, 12 to 16 nm in diameter.

Its subcellular location is the cytoplasm. In terms of biological role, component of the chaperonin-containing T-complex (TRiC), a molecular chaperone complex that assists the folding of proteins upon ATP hydrolysis. In Bos taurus (Bovine), this protein is T-complex protein 1 subunit zeta-2 (CCT6B).